The primary structure comprises 291 residues: Elongation factor Ts (291 aa).

Residues 79-82 (TDFV) form an involved in Mg(2+) ion dislocation from EF-Tu region.

Belongs to the EF-Ts family.

Its subcellular location is the cytoplasm. In terms of biological role, associates with the EF-Tu.GDP complex and induces the exchange of GDP to GTP. It remains bound to the aminoacyl-tRNA.EF-Tu.GTP complex up to the GTP hydrolysis stage on the ribosome. The sequence is that of Elongation factor Ts from Stenotrophomonas maltophilia (strain K279a).